A 37-amino-acid chain; its full sequence is Dolichyl-diphosphooligosaccharide--protein glycosyltransferase subunit 4A (37 aa).

Residues 1–7 (MIDDQDL) are Lumenal-facing. The helical transmembrane segment at 8 to 28 (GFIANFLGIFIFALVIAYHYV) threads the bilayer. Residues 29–37 (TADPKYEAT) lie on the Cytoplasmic side of the membrane.

It belongs to the OST4 family. In terms of assembly, component of the oligosaccharyltransferase (OST) complex.

The protein resides in the endoplasmic reticulum membrane. Its function is as follows. Subunit of the oligosaccharyl transferase (OST) complex that catalyzes the initial transfer of a defined glycan (Glc(3)Man(9)GlcNAc(2) in eukaryotes) from the lipid carrier dolichol-pyrophosphate to an asparagine residue within an Asn-X-Ser/Thr consensus motif in nascent polypeptide chains, the first step in protein N-glycosylation. N-glycosylation occurs cotranslationally and the complex associates with the Sec61 complex at the channel-forming translocon complex that mediates protein translocation across the endoplasmic reticulum (ER). All subunits are required for a maximal enzyme activity. The chain is Dolichyl-diphosphooligosaccharide--protein glycosyltransferase subunit 4A (OST4A) from Arabidopsis thaliana (Mouse-ear cress).